Reading from the N-terminus, the 364-residue chain is Chorismate synthase (364 aa).

Residues arginine 48 and arginine 54 each coordinate NADP(+). Residues 125 to 127 (RSS), glycine 282, 297 to 301 (KPPAS), and arginine 323 contribute to the FMN site.

This sequence belongs to the chorismate synthase family. Homotetramer. It depends on FMNH2 as a cofactor.

It catalyses the reaction 5-O-(1-carboxyvinyl)-3-phosphoshikimate = chorismate + phosphate. The protein operates within metabolic intermediate biosynthesis; chorismate biosynthesis; chorismate from D-erythrose 4-phosphate and phosphoenolpyruvate: step 7/7. Its function is as follows. Catalyzes the anti-1,4-elimination of the C-3 phosphate and the C-6 proR hydrogen from 5-enolpyruvylshikimate-3-phosphate (EPSP) to yield chorismate, which is the branch point compound that serves as the starting substrate for the three terminal pathways of aromatic amino acid biosynthesis. This reaction introduces a second double bond into the aromatic ring system. This Chloroflexus aggregans (strain MD-66 / DSM 9485) protein is Chorismate synthase.